Reading from the N-terminus, the 125-residue chain is Protein ApaG (125 aa).

Residues threonine 3–asparagine 125 enclose the ApaG domain.

This Anaeromyxobacter dehalogenans (strain 2CP-1 / ATCC BAA-258) protein is Protein ApaG.